Reading from the N-terminus, the 341-residue chain is Elongation factor Ts (341 aa).

The tract at residues 80-83 is involved in Mg(2+) ion dislocation from EF-Tu; the sequence is TDFV.

The protein belongs to the EF-Ts family.

The protein localises to the cytoplasm. In terms of biological role, associates with the EF-Tu.GDP complex and induces the exchange of GDP to GTP. It remains bound to the aminoacyl-tRNA.EF-Tu.GTP complex up to the GTP hydrolysis stage on the ribosome. This Lactobacillus gasseri (strain ATCC 33323 / DSM 20243 / BCRC 14619 / CIP 102991 / JCM 1131 / KCTC 3163 / NCIMB 11718 / NCTC 13722 / AM63) protein is Elongation factor Ts.